Reading from the N-terminus, the 1170-residue chain is Glucose transport transcription regulator RGT1 (1170 aa).

Polar residues predominate over residues 1–22 (MNELNTVSTNSSDSTKNGGTSN). Residues 1-46 (MNELNTVSTNSSDSTKNGGTSNSPDDMDSAAAASHAIKKRTKASRA) are disordered. Positions 47–76 (CDQCRKKKIKCDYKDEKGVCSNCQRNGDRC) form a DNA-binding region, zn(2)-C6 fungal-type. A disordered region spans residues 77–149 (SFDRVPLKRG…PSTPSRSNSV (73 aa)). Positions 99-108 (RTNEIQDHNN) are enriched in basic and acidic residues. The span at 113–138 (NTFDNSNNTLNNNTGNSGDNGINSNT) shows a compositional bias: low complexity. Residues 139 to 149 (VPSTPSRSNSV) show a composition bias toward polar residues. Serine 202, serine 205, serine 208, and serine 229 each carry phosphoserine. Disordered regions lie at residues 226–254 (VQQS…SASG), 269–288 (APTD…IPSL), 293–323 (SNSL…LQQG), 384–506 (AQQT…HPMT), and 944–977 (NYRP…SAAP). Positions 239–250 (SGNANGSVTGSG) are enriched in low complexity. Positions 271–280 (TDDHNGEQTR) are enriched in basic and acidic residues. Residues serine 283 and serine 284 each carry the phosphoserine modification. Low complexity-rich tracts occupy residues 293-302 (SNSLLLGGQP), 309-323 (QQSQ…LQQG), and 385-397 (QQTQ…QVPQ). A phosphoserine mark is found at serine 410 and serine 414. Over residues 411 to 422 (APVSVTLSTDRL) the composition is skewed to polar residues. Residues 424 to 444 (GNENNNGEINNNNGSNNSGSS) show a composition bias toward low complexity. The segment covering 445 to 457 (KDTSQHSQESVTT) has biased composition (polar residues). Residues 473 to 488 (STKKRRKSYVSKKTKP) are compositionally biased toward basic residues. The span at 493–506 (SISITSKDSAHPMT) shows a compositional bias: polar residues. Serine 1130 is modified (phosphoserine).

This sequence belongs to the EDS1/RGT1 family. Glucose-induced phosphorylation regulates the DNA-binding activity. Hyperphosphorylation in cells growing on high levels of glucose does prevents DNA-binding and dephosphorylation restores DNA-binding ability.

It localises to the nucleus. The protein resides in the cytoplasm. Glucose-responsive transcription factor that regulates expression of several glucose transporter (HXT) genes in response to glucose. In the absence of glucose, it functions as a transcriptional repressor, whereas high concentrations of glucose cause it to function as a transcriptional activator. In cells growing on low levels of glucose, has a neutral role, neither repressing nor activating transcription. Binds the consensus binding site sequence 5'-CGGANNA-3', of which multiple copies are present in all HXT promoters regulated by RGT1. This Saccharomyces cerevisiae (strain RM11-1a) (Baker's yeast) protein is Glucose transport transcription regulator RGT1 (RGT1).